The sequence spans 213 residues: Pyrrolidone-carboxylate peptidase (213 aa).

Catalysis depends on residues Glu-80, Cys-143, and His-165.

Belongs to the peptidase C15 family. In terms of assembly, homotetramer.

It is found in the cytoplasm. The catalysed reaction is Release of an N-terminal pyroglutamyl group from a polypeptide, the second amino acid generally not being Pro.. Its function is as follows. Removes 5-oxoproline from various penultimate amino acid residues except L-proline. The protein is Pyrrolidone-carboxylate peptidase of Erwinia tasmaniensis (strain DSM 17950 / CFBP 7177 / CIP 109463 / NCPPB 4357 / Et1/99).